A 1323-amino-acid chain; its full sequence is ABC transporter C family member 12 (1323 aa).

The ABC transmembrane type-1 1 domain maps to 110 to 396; that stretch reads HCISLFFYSI…LPILIALGIQ (287 aa). The next 6 helical transmembrane spans lie at 111-131, 152-172, 227-247, 252-272, 338-358, and 375-395; these read CISLFFYSIYVGSQFVGPEIL, MGYYYALIMFGTAMIGSFCNY, VFGILNNGLFALPQIIICLAL, IGWPTFVGLGLMLAAIPFNGL, ILIAMIGAIPTAASILVFSTY, and SYLNLLKIPLGFLPILIALGI. Residues 428–652 enclose the ABC transporter 1 domain; sequence VYMKNSTTTW…KLEFASLLQE (225 aa). 464-471 lines the ATP pocket; that stretch reads GSVGSGKS. The segment at 657 to 695 is disordered; that stretch reads ENTKGDDSDDDDDKKDDDKKEEKVEKPKQSDKDGTLISE. Residues 672-690 show a composition bias toward basic and acidic residues; sequence DDDKKEEKVEKPKQSDKDG. 5 helical membrane-spanning segments follow: residues 712 to 732, 772 to 792, 840 to 860, 862 to 882, and 952 to 972; these read VTAGGGLLFLFAMILFLLETG, IYIGVGMASIIVTVVRTFSFF, LIATSIAQFFTLMLSVLATLI, ISIIVPWLLIPLAPICILFFI, and WLGLRLDFLGNLIVFFSCIFI. Positions 720–1010 constitute an ABC transmembrane type-1 2 domain; sequence FLFAMILFLL…GVLQAADTET (291 aa). The 235-residue stretch at 1047 to 1281 folds into the ABC transporter 2 domain; the sequence is IKFDNLVMRY…QNGLLTWLVN (235 aa). 1081–1088 serves as a coordination point for ATP; it reads GRTGAGKS.

The protein belongs to the ABC transporter superfamily. ABCC family. Conjugate transporter (TC 3.A.1.208) subfamily.

The protein resides in the membrane. The chain is ABC transporter C family member 12 (abcC12) from Dictyostelium discoideum (Social amoeba).